Here is a 37-residue protein sequence, read N- to C-terminus: Large ribosomal subunit protein bL36B (37 aa).

This sequence belongs to the bacterial ribosomal protein bL36 family.

The sequence is that of Large ribosomal subunit protein bL36B from Aeromonas salmonicida (strain A449).